Reading from the N-terminus, the 146-residue chain is Large ribosomal subunit protein uL15y (146 aa).

2 stretches are compositionally biased toward basic residues: residues 1 to 14 (MATA…KRGH) and 21 to 30 (RIGKHRKHPG). The disordered stretch occupies residues 1–38 (MATALKKNRKKRGHVSAGHGRIGKHRKHPGGRGNAGGM).

Belongs to the universal ribosomal protein uL15 family.

This chain is Large ribosomal subunit protein uL15y (RPL27AB), found in Arabidopsis thaliana (Mouse-ear cress).